We begin with the raw amino-acid sequence, 515 residues long: MGKEKTHINLVVIGHVDAGKSTTTGHLIYKLGGIDARTIAKFEADAKEMGKSSFKYAWVLDKLKAERERGITIDIALWKFSTAKFEYTVIDAPGHRDFIKNMITGTSQADVALLVIDGNNFEAGIAEGGSTKEHALLAYTLGVKQLAVGINKMDDVKDKDGGPWAQGRYNEVVDYLGPELMKIGFKKKDKGDKKKGDKKEKKDKKDKGEKKYVCSATFVPISGWTGDNMLEKSTNMPWYTGPTLFEVLDAMKPPKRPTEDPLRLPLQDVYKIGGIGTVPVGRVETGILKAGMQVTFEPAGKAAVEVKSVEMHHTSVPQAIPGDNVGFNVKLTVKDIKRGDVCGDTKNDPPIPTECFLANVIIQDHKNIRNGYTPVLDCHTAHIACKFASILSKKDKRGKQTHDVSDDTEWATKDDAEPRNNRMNIAAKTGESVNVWLQPTKAMVVEAYSMYSPLGRFAVRDMKKTVAVGVIQCVQPRNMAKGATEELPIRGESDAVSKYIKFRPLPLKAGKKAKK.

A tr-type G domain is found at 5–258 (KTHINLVVIG…DAMKPPKRPT (254 aa)). Residues 14–21 (GHVDAGKS) form a G1 region. 14–21 (GHVDAGKS) contributes to the GTP binding site. Lysine 55 bears the N6,N6-dimethyllysine mark. Positions 70–74 (GITID) are G2. An N6,N6,N6-trimethyllysine modification is found at lysine 79. Residues 91-94 (DAPG) are G3. Residues 91 to 95 (DAPGH) and 151 to 154 (NKMD) each bind GTP. The segment at 151-154 (NKMD) is G4. The tract at residues 187-206 (KKDKGDKKKGDKKEKKDKKD) is disordered. A compositionally biased stretch (basic and acidic residues) spans 189–206 (DKGDKKKGDKKEKKDKKD). The tract at residues 222–224 (SGW) is G5. Lysine 289 is subject to N6-methyllysine. Residue lysine 334 is modified to N6,N6,N6-trimethyllysine. Residues 396–419 (KRGKQTHDVSDDTEWATKDDAEPR) form a disordered region. Over residues 398–419 (GKQTHDVSDDTEWATKDDAEPR) the composition is skewed to basic and acidic residues. N6,N6,N6-trimethyllysine is present on lysine 441.

It belongs to the TRAFAC class translation factor GTPase superfamily. Classic translation factor GTPase family. EF-Tu/EF-1A subfamily.

It is found in the cytoplasm. In terms of biological role, this protein promotes the GTP-dependent binding of aminoacyl-tRNA to the A-site of ribosomes during protein biosynthesis. The protein is Elongation factor 1-alpha S (TEF-S) of Porphyra purpurea (Red seaweed).